A 381-amino-acid polypeptide reads, in one-letter code: Creatine kinase M-type (381 aa).

A Phosphagen kinase N-terminal domain is found at lysine 11–glycine 98. A Phosphagen kinase C-terminal domain is found at tyrosine 125–leucine 367. Serine 128–arginine 132 lines the ATP pocket. Phosphoserine is present on serine 164. Threonine 166 carries the post-translational modification Phosphothreonine. At serine 178 the chain carries Phosphoserine. Threonine 180 carries the post-translational modification Phosphothreonine. Histidine 191 lines the ATP pocket. Position 199 is a phosphoserine (serine 199). Residues arginine 236 and arginine 292 each coordinate ATP. 2 positions are modified to phosphothreonine: threonine 313 and threonine 322. Residues arginine 320–valine 325 and aspartate 335 each bind ATP. A Phosphoserine modification is found at serine 372.

This sequence belongs to the ATP:guanido phosphotransferase family. In terms of assembly, dimer of identical or non-identical chains, which can be either B (brain type) or M (muscle type). With MM being the major form in skeletal muscle and myocardium, MB existing in myocardium, and BB existing in many tissues, especially brain.

It localises to the cytoplasm. It carries out the reaction creatine + ATP = N-phosphocreatine + ADP + H(+). Its function is as follows. Reversibly catalyzes the transfer of phosphate between ATP and various phosphogens (e.g. creatine phosphate). Creatine kinase isoenzymes play a central role in energy transduction in tissues with large, fluctuating energy demands, such as skeletal muscle, heart, brain and spermatozoa. The sequence is that of Creatine kinase M-type (Ckm) from Mus musculus (Mouse).